The sequence spans 502 residues: L-amino-acid oxidase BmooLAAO-I (502 aa).

Positions 1 to 18 are cleaved as a signal peptide; that stretch reads MNVFFTFSLLFLAALGSC. The cysteines at positions 28 and 191 are disulfide-linked. FAD contacts are provided by residues 61–62, 81–82, Arg-89, and 105–108; these read MS, EA, and GPMR. Arg-108 contacts substrate. The N-linked (GlcNAc...) asparagine glycan is linked to Asn-190. His-241 contributes to the substrate binding site. Val-279 contributes to the FAD binding site. A disulfide bridge connects residues Cys-349 and Cys-430. A substrate-binding site is contributed by Tyr-390. FAD-binding positions include Glu-475 and 482-487; that span reads GWIDST. 482-483 is a binding site for substrate; that stretch reads GW.

This sequence belongs to the flavin monoamine oxidase family. FIG1 subfamily. Homodimer; non-covalently linked. FAD is required as a cofactor. N-glycosylated. The enzymatic activity is not affected by deglycosylation. In terms of tissue distribution, expressed by the venom gland.

The protein resides in the secreted. The enzyme catalyses an L-alpha-amino acid + O2 + H2O = a 2-oxocarboxylate + H2O2 + NH4(+). It catalyses the reaction L-leucine + O2 + H2O = 4-methyl-2-oxopentanoate + H2O2 + NH4(+). It carries out the reaction L-phenylalanine + O2 + H2O = 3-phenylpyruvate + H2O2 + NH4(+). The catalysed reaction is L-tryptophan + O2 + H2O = indole-3-pyruvate + H2O2 + NH4(+). The enzyme catalyses L-methionine + O2 + H2O = 4-methylsulfanyl-2-oxobutanoate + H2O2 + NH4(+). It catalyses the reaction L-isoleucine + O2 + H2O = (S)-3-methyl-2-oxopentanoate + H2O2 + NH4(+). It carries out the reaction L-histidine + O2 + H2O = 3-(imidazol-5-yl)pyruvate + H2O2 + NH4(+). The catalysed reaction is L-tyrosine + O2 + H2O = 3-(4-hydroxyphenyl)pyruvate + H2O2 + NH4(+). The enzyme catalyses L-alanine + O2 + H2O = pyruvate + H2O2 + NH4(+). It catalyses the reaction L-valine + O2 + H2O = 3-methyl-2-oxobutanoate + H2O2 + NH4(+). With respect to regulation, its enzymatic activities is reduced when it is exposed to Ca(2+), Zn(2+), Al(3+), Cu(2+) or Ni(2+) salts. Catalyzes an oxidative deamination of predominantly hydrophobic and aromatic L-amino acids, thus producing hydrogen peroxide that may contribute to the toxicity of the venom. Shows very high activity on L-Met, and L-Leu, high activity on L-Ile, L-Phe and L-Tyr and moderate activity on L-His, L-Val and L-Ala. Exhibits diverse biological activities, such as edema, apoptosis of tumor cell lines, antibacterial activities against both Gram-positive and Gram-negative bacteria, as well as induction of platelet aggregation. Effects of snake L-amino oxidases on platelets are controversial, since they either induce aggregation or inhibit agonist-induced aggregation. These different effects are probably due to different experimental conditions. Unlike other snake venom L-amino acid oxidases, does not induce hemorrhage. It may also induce hemolysis. Has parasiticidal activities against and leishmania, as a result of enzyme-catalyzed hydrogen peroxide production. The protein is L-amino-acid oxidase BmooLAAO-I of Bothrops moojeni (Lance-headed viper).